Consider the following 115-residue polypeptide: T cell receptor beta variable 12-5 (115 aa).

Residues 1–21 (MATRLLCCVVLCLLGEELIDA) form the signal peptide. In terms of domain architecture, Ig-like spans 22–115 (RVTQTPRHKV…SAVYFCASGL (94 aa)). Cysteine 42 and cysteine 111 are disulfide-bonded.

As to quaternary structure, alpha-beta TR is a heterodimer composed of an alpha and beta chain; disulfide-linked. The alpha-beta TR is associated with the transmembrane signaling CD3 coreceptor proteins to form the TR-CD3 (TcR or TCR). The assembly of alpha-beta TR heterodimers with CD3 occurs in the endoplasmic reticulum where a single alpha-beta TR heterodimer associates with one CD3D-CD3E heterodimer, one CD3G-CD3E heterodimer and one CD247 homodimer forming a stable octameric structure. CD3D-CD3E and CD3G-CD3E heterodimers preferentially associate with TR alpha and TR beta chains, respectively. The association of the CD247 homodimer is the last step of TcR assembly in the endoplasmic reticulum and is required for transport to the cell surface.

It is found in the cell membrane. In terms of biological role, v region of the variable domain of T cell receptor (TR) beta chain that participates in the antigen recognition. Alpha-beta T cell receptors are antigen specific receptors which are essential to the immune response and are present on the cell surface of T lymphocytes. Recognize peptide-major histocompatibility (MH) (pMH) complexes that are displayed by antigen presenting cells (APC), a prerequisite for efficient T cell adaptive immunity against pathogens. Binding of alpha-beta TR to pMH complex initiates TR-CD3 clustering on the cell surface and intracellular activation of LCK that phosphorylates the ITAM motifs of CD3G, CD3D, CD3E and CD247 enabling the recruitment of ZAP70. In turn ZAP70 phosphorylates LAT, which recruits numerous signaling molecules to form the LAT signalosome. The LAT signalosome propagates signal branching to three major signaling pathways, the calcium, the mitogen-activated protein kinase (MAPK) kinase and the nuclear factor NF-kappa-B (NF-kB) pathways, leading to the mobilization of transcription factors that are critical for gene expression and essential for T cell growth and differentiation. The T cell repertoire is generated in the thymus, by V-(D)-J rearrangement. This repertoire is then shaped by intrathymic selection events to generate a peripheral T cell pool of self-MH restricted, non-autoaggressive T cells. Post-thymic interaction of alpha-beta TR with the pMH complexes shapes TR structural and functional avidity. The protein is T cell receptor beta variable 12-5 of Homo sapiens (Human).